Here is a 117-residue protein sequence, read N- to C-terminus: Ribonuclease P protein component (117 aa).

Belongs to the RnpA family. As to quaternary structure, consists of a catalytic RNA component (M1 or rnpB) and a protein subunit.

The catalysed reaction is Endonucleolytic cleavage of RNA, removing 5'-extranucleotides from tRNA precursor.. RNaseP catalyzes the removal of the 5'-leader sequence from pre-tRNA to produce the mature 5'-terminus. It can also cleave other RNA substrates such as 4.5S RNA. The protein component plays an auxiliary but essential role in vivo by binding to the 5'-leader sequence and broadening the substrate specificity of the ribozyme. This is Ribonuclease P protein component from Aliivibrio fischeri (strain ATCC 700601 / ES114) (Vibrio fischeri).